The chain runs to 126 residues: Aspartate 1-decarboxylase (126 aa).

The Schiff-base intermediate with substrate; via pyruvic acid role is filled by serine 25. Position 25 is a pyruvic acid (Ser) (serine 25). Threonine 57 is a binding site for substrate. Catalysis depends on tyrosine 58, which acts as the Proton donor. 73–75 (GAA) serves as a coordination point for substrate.

This sequence belongs to the PanD family. As to quaternary structure, heterooctamer of four alpha and four beta subunits. Pyruvate serves as cofactor. Is synthesized initially as an inactive proenzyme, which is activated by self-cleavage at a specific serine bond to produce a beta-subunit with a hydroxyl group at its C-terminus and an alpha-subunit with a pyruvoyl group at its N-terminus.

The protein resides in the cytoplasm. It catalyses the reaction L-aspartate + H(+) = beta-alanine + CO2. Its pathway is cofactor biosynthesis; (R)-pantothenate biosynthesis; beta-alanine from L-aspartate: step 1/1. Its function is as follows. Catalyzes the pyruvoyl-dependent decarboxylation of aspartate to produce beta-alanine. This Pseudomonas aeruginosa (strain LESB58) protein is Aspartate 1-decarboxylase.